A 409-amino-acid chain; its full sequence is Peptidase T (409 aa).

Residue H80 coordinates Zn(2+). The active site involves D82. D143 serves as a coordination point for Zn(2+). E177 functions as the Proton acceptor in the catalytic mechanism. Positions 178, 200, and 382 each coordinate Zn(2+).

The protein belongs to the peptidase M20B family. Zn(2+) serves as cofactor.

The protein localises to the cytoplasm. It catalyses the reaction Release of the N-terminal residue from a tripeptide.. Its function is as follows. Cleaves the N-terminal amino acid of tripeptides. This Enterococcus faecalis (strain ATCC 700802 / V583) protein is Peptidase T.